The following is a 234-amino-acid chain: Nuclear ubiquitous casein and cyclin-dependent kinase substrate 1 (234 aa).

The interval 1–234 is disordered; the sequence is MSRPVRNRKV…SEDEASSGED (234 aa). Tyrosine 13 carries the post-translational modification Phosphotyrosine. Phosphoserine is present on residues serine 14 and serine 19. At tyrosine 26 the chain carries Phosphotyrosine. A compositionally biased stretch (basic residues) spans 35-51; that stretch reads KKIRSSPREAKNKRRSG. A phosphoserine mark is found at serine 54, serine 58, serine 61, serine 73, serine 75, and serine 79. Basic and acidic residues predominate over residues 64–77; the sequence is KDVKTKKDDSHSAE. A compositionally biased stretch (low complexity) spans 91-100; it reads QQRQAASKAA. Residues 111–124 show a composition bias toward acidic residues; it reads VGSEEEPEEDDEAP. Serine 113, serine 130, serine 132, and serine 144 each carry phosphoserine. Residues 132–145 show a composition bias toward acidic residues; that stretch reads SDEDFLMEDDDDSD. Over residues 149–174 the composition is skewed to basic residues; sequence SKKKNKKMVKKSKPERKEKKMPKPRL. Threonine 179 is modified (phosphothreonine). Serine 181 carries the phosphoserine modification. Residues 185–199 are compositionally biased toward basic residues; that stretch reads GKAKVGRPTASKKSK. A Phosphothreonine modification is found at threonine 202. Phosphoserine is present on residues serine 204, serine 214, serine 225, and serine 231. Residues 223 to 234 are compositionally biased toward acidic residues; it reads EGSEDEASSGED.

Does not interact with RAD51. Post-translationally, phosphorylated in an ATM-dependent manner in response to DNA damage. Phosphorylated by CDK1 and casein kinase.

The protein resides in the nucleus. It is found in the chromosome. Chromatin-associated protein involved in DNA repair by promoting homologous recombination (HR). Binds double-stranded DNA (dsDNA) and secondary DNA structures, such as D-loop structures, but with less affinity than RAD51AP1. The sequence is that of Nuclear ubiquitous casein and cyclin-dependent kinase substrate 1 (Nucks1) from Mus musculus (Mouse).